The following is a 193-amino-acid chain: dCTP deaminase (193 aa).

DCTP-binding positions include 110-115, D128, 136-138, Y171, K178, and Q182; these read RSSLAR and VLE. Residue E138 is the Proton donor/acceptor of the active site. The interval 169–193 is disordered; that stretch reads RPYNRREDAKYRNQQGAVASRIDKD.

It belongs to the dCTP deaminase family. Homotrimer.

It catalyses the reaction dCTP + H2O + H(+) = dUTP + NH4(+). The protein operates within pyrimidine metabolism; dUMP biosynthesis; dUMP from dCTP (dUTP route): step 1/2. Functionally, catalyzes the deamination of dCTP to dUTP. This chain is dCTP deaminase, found in Escherichia coli O8 (strain IAI1).